The following is an 873-amino-acid chain: uncharacterized protein (873 aa).

Disordered stretches follow at residues 1-24, 175-251, 375-423, 506-540, 568-592, 662-773, and 822-855; these read MSNK…SMSK, SSAV…TSIS, PSRH…AKKP, DSES…ATRS, DQSS…APEY, ANDS…TSQI, and ANPY…EEPI. A compositionally biased stretch (basic and acidic residues) spans 211-225; the sequence is KDSDRSQTKNTHEET. Positions 376-385 are enriched in basic residues; sequence SRHHSHRKKE. Residues 574–586 show a composition bias toward basic residues; sequence PGRHFGKTGRSHF. Residues 665-686 are compositionally biased toward low complexity; it reads SPNSSESLESLNNQSYSSSPYS. Residues 698–740 are compositionally biased toward polar residues; the sequence is QSLNDSPQTSDFKASNLNDSSSNVHSIFQTRETTSPSVQNKTP. Residues 743 to 755 show a composition bias toward basic and acidic residues; the sequence is YHRELKSSKDGHE. Positions 758–773 are enriched in low complexity; that stretch reads SPLVSSSPSGSFTSQI. The span at 823-855 shows a compositional bias: polar residues; that stretch reads NPYSTNNDGNPSNNTSDVEVNETSMNDNSEEPI.

It localises to the cytoplasm. Its subcellular location is the vacuole membrane. This is an uncharacterized protein from Schizosaccharomyces pombe (strain 972 / ATCC 24843) (Fission yeast).